A 445-amino-acid chain; its full sequence is GTPase Der (445 aa).

2 consecutive EngA-type G domains span residues 3–167 (PVIA…YAGQ) and 180–353 (IKIA…AAAM). Residues 9–16 (GRPNVGKS), 56–60 (DTGGF), 119–122 (NKAE), 186–193 (GRPNVGKS), 233–237 (DTAGL), and 298–301 (NKWD) contribute to the GTP site. Positions 354–438 (AKLPTPKLTR…PLRIEFRSSN (85 aa)) constitute a KH-like domain.

The protein belongs to the TRAFAC class TrmE-Era-EngA-EngB-Septin-like GTPase superfamily. EngA (Der) GTPase family. Associates with the 50S ribosomal subunit.

GTPase that plays an essential role in the late steps of ribosome biogenesis. The sequence is that of GTPase Der from Burkholderia lata (strain ATCC 17760 / DSM 23089 / LMG 22485 / NCIMB 9086 / R18194 / 383).